Reading from the N-terminus, the 474-residue chain is tRNA-2-methylthio-N(6)-dimethylallyladenosine synthase (474 aa).

The MTTase N-terminal domain maps to 3–120; it reads QKLHIKTWGC…LPEMINQIRG (118 aa). The [4Fe-4S] cluster site is built by Cys12, Cys49, Cys83, Cys157, Cys161, and Cys164. One can recognise a Radical SAM core domain in the interval 143–375; it reads KAEGPTAFVS…QQRINNQAAK (233 aa). Positions 378–441 constitute a TRAM domain; the sequence is RAMLGTEQRV…TNSLRGDVIR (64 aa).

This sequence belongs to the methylthiotransferase family. MiaB subfamily. Monomer. It depends on [4Fe-4S] cluster as a cofactor.

The protein resides in the cytoplasm. It carries out the reaction N(6)-dimethylallyladenosine(37) in tRNA + (sulfur carrier)-SH + AH2 + 2 S-adenosyl-L-methionine = 2-methylsulfanyl-N(6)-dimethylallyladenosine(37) in tRNA + (sulfur carrier)-H + 5'-deoxyadenosine + L-methionine + A + S-adenosyl-L-homocysteine + 2 H(+). Catalyzes the methylthiolation of N6-(dimethylallyl)adenosine (i(6)A), leading to the formation of 2-methylthio-N6-(dimethylallyl)adenosine (ms(2)i(6)A) at position 37 in tRNAs that read codons beginning with uridine. The sequence is that of tRNA-2-methylthio-N(6)-dimethylallyladenosine synthase from Actinobacillus succinogenes (strain ATCC 55618 / DSM 22257 / CCUG 43843 / 130Z).